Here is a 410-residue protein sequence, read N- to C-terminus: Multifunctional CCA protein (410 aa).

Glycine 8 and arginine 11 together coordinate ATP. 2 residues coordinate CTP: glycine 8 and arginine 11. Mg(2+) is bound by residues aspartate 21 and aspartate 23. ATP-binding residues include arginine 91, arginine 138, and arginine 141. Positions 91, 138, and 141 each coordinate CTP. Positions 229 to 347 (TGIHQEMVSD…AQLALVCEAD (119 aa)) constitute an HD domain.

Belongs to the tRNA nucleotidyltransferase/poly(A) polymerase family. Bacterial CCA-adding enzyme type 1 subfamily. As to quaternary structure, monomer. Can also form homodimers and oligomers. It depends on Mg(2+) as a cofactor. Ni(2+) is required as a cofactor.

It catalyses the reaction a tRNA precursor + 2 CTP + ATP = a tRNA with a 3' CCA end + 3 diphosphate. It carries out the reaction a tRNA with a 3' CCA end + 2 CTP + ATP = a tRNA with a 3' CCACCA end + 3 diphosphate. Functionally, catalyzes the addition and repair of the essential 3'-terminal CCA sequence in tRNAs without using a nucleic acid template. Adds these three nucleotides in the order of C, C, and A to the tRNA nucleotide-73, using CTP and ATP as substrates and producing inorganic pyrophosphate. tRNA 3'-terminal CCA addition is required both for tRNA processing and repair. Also involved in tRNA surveillance by mediating tandem CCA addition to generate a CCACCA at the 3' terminus of unstable tRNAs. While stable tRNAs receive only 3'-terminal CCA, unstable tRNAs are marked with CCACCA and rapidly degraded. This is Multifunctional CCA protein from Xanthomonas oryzae pv. oryzae (strain MAFF 311018).